The sequence spans 245 residues: Type III pantothenate kinase (245 aa).

6–13 (DVGNTAMK) contacts ATP. Residues Y93 and 100-103 (GVDR) contribute to the substrate site. Residue D102 is the Proton acceptor of the active site. Residue D121 participates in K(+) binding. S124 contributes to the ATP binding site. T175 is a binding site for substrate.

The protein belongs to the type III pantothenate kinase family. Homodimer. NH4(+) serves as cofactor. K(+) is required as a cofactor.

It is found in the cytoplasm. The enzyme catalyses (R)-pantothenate + ATP = (R)-4'-phosphopantothenate + ADP + H(+). It functions in the pathway cofactor biosynthesis; coenzyme A biosynthesis; CoA from (R)-pantothenate: step 1/5. In terms of biological role, catalyzes the phosphorylation of pantothenate (Pan), the first step in CoA biosynthesis. The chain is Type III pantothenate kinase from Alcanivorax borkumensis (strain ATCC 700651 / DSM 11573 / NCIMB 13689 / SK2).